A 188-amino-acid polypeptide reads, in one-letter code: ATP-dependent protease subunit HslV (188 aa).

T7 is a catalytic residue. The Na(+) site is built by G162, C165, and S168.

Belongs to the peptidase T1B family. HslV subfamily. In terms of assembly, a double ring-shaped homohexamer of HslV is capped on each side by a ring-shaped HslU homohexamer. The assembly of the HslU/HslV complex is dependent on binding of ATP.

The protein localises to the cytoplasm. It carries out the reaction ATP-dependent cleavage of peptide bonds with broad specificity.. Its activity is regulated as follows. Allosterically activated by HslU binding. Functionally, protease subunit of a proteasome-like degradation complex believed to be a general protein degrading machinery. In Thiobacillus denitrificans (strain ATCC 25259 / T1), this protein is ATP-dependent protease subunit HslV.